The sequence spans 988 residues: MIRLVFLFLLVVLSVELLDFRSNNYRQIINNALPTIDPQMISQAQAAINPYTDIFVNPPNSFVDFPMANIASSGAFWQQPQSTVSQVAWNPPVSTNPSSSPAASTISFQSYQNPSTFPSTTTASTTTSTTTMPPTYQTTTKSVKKNTETLWTTSKSPMKLSKNPKPSKLNQKSSKSSATSFDSAQLSVLSHRLLNDVLIIPSSRRLYILAIIPIHQSSGQQNFECGEIDVNAIVRMAAFLEAQKTINESNLLKEIGVDIGAIIVDSCSTDLRSVADLYELLSGTNIQKSDLIAIIRDDSTFMPNTEQIIRQLNLPVVNTFFTTRSAVQTSGTLPSMFLPIQSIISALRHYQSTCVNIIFDEKYSESVSEFQQVALTEGICVEVAIHVKNASSTVSEMVVRRLLLSEARIVVALLSEDTWIQMTKALRSEMVIAGRFVFISMQDQRWTTSRKFIESWPTFEQHLISITPKTPINHEEEIKKLTENIPKLSLPNLWLKQFWSSAFKCHVDNEDMGGSNSFSRECATTQSLNISQVAPDVDVASISLATHAIGIAFRSFVDRVCPGALVISLSDCVNDPFVGFHQSILDSDFVHHLSDIPVSFNYSTGFRDISLRINRVQFVEDRLQFSELGIVDPIQFTYQDSSDTATPSARGSYLLMSSTCPKSTCAKELAKSTIKQQLPSIVKALTDLEIMIFTIFSVLSALTCLMCMYLKVISVSEYRNLTAVTFLGLAFLSISAPAFIIPPNSISCSLRKLLFPIAISITIAPVFVKTVLIWKSIGSSSSSVLIAFCIVLIQTVISTEWLLLASDSATEFVSTLHGTMWRCSPGDSSEEMILLSCSLIALLSLLSFIFALATLKHSQSLQHLMISILAILFETALYVSLPLIPYKTRDTVMATTILIFAFVALLLSHTGKSSAKKESECGGTLQKTNENWLQHVVQSPQDQMTLVKNYHTASTHAQSTMQFEKRSEDTLRRNTSLYGTEGYELPTP.

Positions 1–17 (MIRLVFLFLLVVLSVEL) are cleaved as a signal peptide. Residues 111-176 (YQNPSTFPST…SKLNQKSSKS (66 aa)) form a disordered region. The segment covering 114 to 140 (PSTFPSTTTASTTTSTTTMPPTYQTTT) has biased composition (low complexity). N-linked (GlcNAc...) asparagine glycosylation is found at Asn247, Asn389, Asn529, and Asn601. Residues 690 to 710 (IMIFTIFSVLSALTCLMCMYL) form a helical membrane-spanning segment. N-linked (GlcNAc...) asparagine glycosylation is present at Asn720. The next 6 membrane-spanning stretches (helical) occupy residues 721-741 (LTAV…AFII), 753-773 (LLFP…TVLI), 784-804 (VLIA…WLLL), 832-852 (MILL…IFAL), 864-884 (LMIS…LPLI), and 891-911 (TVMA…SHTG). Residues 966–988 (RSEDTLRRNTSLYGTEGYELPTP) form a disordered region. The N-linked (GlcNAc...) asparagine glycan is linked to Asn974.

It is found in the membrane. This is an uncharacterized protein from Caenorhabditis elegans.